Consider the following 325-residue polypeptide: UPF0324 membrane protein Bd1437 (325 aa).

Transmembrane regions (helical) follow at residues 21-43, 58-80, 87-105, 115-137, 144-166, 211-230, 243-260, and 302-324; these read IAAL…GIVL, YTHH…MVVG, IGYT…MLIG, STLI…APTI, VSVA…PWIG, ARAL…YFRG, PWFI…TWIP, and LQGV…IGWI.

Belongs to the UPF0324 family.

It is found in the cell membrane. This Bdellovibrio bacteriovorus (strain ATCC 15356 / DSM 50701 / NCIMB 9529 / HD100) protein is UPF0324 membrane protein Bd1437.